Here is a 158-residue protein sequence, read N- to C-terminus: Lipoprotein signal peptidase (158 aa).

Helical transmembrane passes span 7-27 (LFWI…YWVV), 38-58 (ILPG…FSLF), 67-87 (WLSL…PVLD), and 95-115 (GLIL…GYVV). Residues Asp-116 and Asp-132 contribute to the active site. The chain crosses the membrane as a helical span at residues 125–145 (FAVFNMADSFISIGIVCLLLA).

The protein belongs to the peptidase A8 family.

It localises to the cell inner membrane. The enzyme catalyses Release of signal peptides from bacterial membrane prolipoproteins. Hydrolyzes -Xaa-Yaa-Zaa-|-(S,diacylglyceryl)Cys-, in which Xaa is hydrophobic (preferably Leu), and Yaa (Ala or Ser) and Zaa (Gly or Ala) have small, neutral side chains.. Its pathway is protein modification; lipoprotein biosynthesis (signal peptide cleavage). In terms of biological role, this protein specifically catalyzes the removal of signal peptides from prolipoproteins. The chain is Lipoprotein signal peptidase from Nostoc sp. (strain PCC 7120 / SAG 25.82 / UTEX 2576).